We begin with the raw amino-acid sequence, 222 residues long: Physcion biosynthesis cluster O-methyltransferase (222 aa).

It belongs to the methyltransferase superfamily.

The enzyme catalyses emodin + S-adenosyl-L-methionine = physcion + S-adenosyl-L-homocysteine. The protein operates within secondary metabolite biosynthesis. In terms of biological role, O-methyltransferase; part of the gene cluster that mediates the biosynthesis of physcion, a natural anthraquinone fungicide that can prevent plant fungal infections. Within the pathway, the O-methyltransferase AcOMT catalyzes the last step by transferring a methyl group to C-6 hydroxyl of emodin to form physcion. AcOMT may also methylate the C-6 hydroxyl group of emodin anthrone to produce physcion-anthrone B. The pathway begins with the polyketide synthase AcPKS that condenses 8 malonyl-CoA units to synthesize atrochrysone thioester which is released from the synthase by the atrochrysone carboxyl ACP thioesterase AcTE that breaks the thioester bond and leads to free atrochrysone carboxylic acid. Spontaneous decarboxylation of atrochrysone carboxylic acid leads to the formation of atrochrysone. Then, atrochrysone undergoes spontaneous dehydration and oxidation, giving the products emodin anthrone and emodin. The O-methyltransferase AcOMT then methylates the C-6 hydroxyl of emodin to form physcion. In Aspergillus chevalieri (Eurotium chevalieri), this protein is Physcion biosynthesis cluster O-methyltransferase.